The chain runs to 611 residues: MNNKEMKARQEKIRNFSIIAHIDHGKSTLADRILEKTNTVSSREMQDQLLDSMDLERERGITIKLNAIELNYTAKDGEIYTFHLIDTPGHVDFTYEVSRSLAACEGAVLVVDAAQGIEAQTLANVYLALDNDLEILPVINKIDLPAADPERVRTEIEDVIGIDASEAVLASAKAGIGIEDILEQVVEYVPAPSGDIEAPLKALIFDSIYDSYRGVVLNIRVIDGVVRPGDKIQMMSNGKTFDVTEVGVFSPKPIARDYLMVGDVGYITASIKTVQDTRVGDTVTLADNPAAEALPGYRKMNPMVYCGLYPIDTSRYNDLREALEKLQLNDAALQFEPETSQALGFGFRCGFLGLLHMDVVQERLEREFNLELITTAPSVIYHVNKTDGTTVVVDNPAEFPEPVTIESVEEPYVKAQIMVPNDYVGAVMELSQRKRGEFITMDYLDDYRVNVVYEIPLSEIVFDFFDKLKSSTKGYASLDYEMAGYRTSRLVKMDILLNAEKVDALSFIVHRDFAFERGKAIVEKLKKLIPRQQFEVPVQAAIGQKIVARSDIKALRKNVLAKCYGGDVSRKRKLLEKQKEGKKRMKQIGSVEVPQEAFMAVLKMDDQDNAK.

Residues 11-193 enclose the tr-type G domain; the sequence is EKIRNFSIIA…QVVEYVPAPS (183 aa). Residues 23-28 and 140-143 each bind GTP; these read DHGKST and NKID.

Belongs to the TRAFAC class translation factor GTPase superfamily. Classic translation factor GTPase family. LepA subfamily.

The protein resides in the cell membrane. The enzyme catalyses GTP + H2O = GDP + phosphate + H(+). Its function is as follows. Required for accurate and efficient protein synthesis under certain stress conditions. May act as a fidelity factor of the translation reaction, by catalyzing a one-codon backward translocation of tRNAs on improperly translocated ribosomes. Back-translocation proceeds from a post-translocation (POST) complex to a pre-translocation (PRE) complex, thus giving elongation factor G a second chance to translocate the tRNAs correctly. Binds to ribosomes in a GTP-dependent manner. This chain is Elongation factor 4, found in Enterococcus faecalis (strain ATCC 700802 / V583).